A 979-amino-acid polypeptide reads, in one-letter code: DNA ligase 4 (979 aa).

A disordered region spans residues M1 to L39. Positions 320, 322, 323, 327, 389, 430, 490, 495, 512, and 514 each coordinate ATP. Residue K322 is the N6-AMP-lysine intermediate of the active site. E389 contacts Mg(2+). E490 is a Mg(2+) binding site. 2 BRCT domains span residues P721–L814 and L867–P965.

It belongs to the ATP-dependent DNA ligase family. Mg(2+) is required as a cofactor.

The protein resides in the nucleus. It carries out the reaction ATP + (deoxyribonucleotide)n-3'-hydroxyl + 5'-phospho-(deoxyribonucleotide)m = (deoxyribonucleotide)n+m + AMP + diphosphate.. DNA ligase involved in DNA non-homologous end joining (NHEJ); required for double-strand break (DSB) repair. This is DNA ligase 4 (lig4) from Aspergillus fumigatus (strain ATCC MYA-4609 / CBS 101355 / FGSC A1100 / Af293) (Neosartorya fumigata).